Here is a 1256-residue protein sequence, read N- to C-terminus: Octopamine receptor beta-3R (1256 aa).

At 1 to 143 (MSGVNVADLL…LDLSLLLLKG (143 aa)) the chain is on the extracellular side. N-linked (GlcNAc...) asparagine glycosylation is found at Asn36, Asn113, and Asn117. A helical membrane pass occupies residues 144–164 (FIFSSIILAAVLGNALVIISV). Residues 165–171 (QRNRKLR) are Cytoplasmic-facing. A helical membrane pass occupies residues 172–192 (VITNYFVVSLAMADMLVALCA). Residues 193 to 213 (MTFNASVELSGGKWMFGPFMC) lie on the Extracellular side of the membrane. Residue Asn196 is glycosylated (N-linked (GlcNAc...) asparagine). The chain crosses the membrane as a helical span at residues 214 to 236 (NVYNSLDVYFSTASILHLCCISV). The Cytoplasmic portion of the chain corresponds to 237–258 (DRYYAIVRPLEYPLNMTHKTVC). A helical membrane pass occupies residues 259-279 (FMLANVWILPALISFTPIFLG). At 280–305 (WYTTEEHLREISLHPDQCSFVVNKAY) the chain is on the extracellular side. The helical transmembrane segment at 306 to 326 (ALISSSVSFWIPGIVMLVMYW) threads the bilayer. At 327 to 1169 (RIFKEAIRQR…WKAEHKAART (843 aa)) the chain is on the cytoplasmic side. Disordered regions lie at residues 377–427 (AREE…DLRD), 480–512 (ELDK…ESTA), 665–698 (LSHS…NKPD), 751–774 (GESP…EPSG), and 1087–1117 (DTTV…SSTR). Positions 396–406 (TDEDDDRDECD) are enriched in acidic residues. The segment covering 489 to 498 (NGPQQQLSLT) has biased composition (polar residues). Residues 757 to 770 (PATPPPSLSPPELP) are compositionally biased toward pro residues. A helical membrane pass occupies residues 1170–1190 (LGIIMGVFLLCWLPFFLWYVI). At 1191-1202 (TSLCGPACPCPD) the chain is on the extracellular side. The chain crosses the membrane as a helical span at residues 1203–1223 (VLVVVLFWIGYFNSTLNPLIY). Over 1224-1256 (AYFNRDFREAFRNTLECVLPCLEKRNPYNAYYV) the chain is Cytoplasmic.

It belongs to the G-protein coupled receptor 1 family. In terms of tissue distribution, in the adult, expressed in the inferior and superior protocerebrum, the posterior lateral protocerebrum, the deutocerebrum, the surface of the subesophageal ganglion, the lateral cell body region, the cortical layer of the ventral nerve cord and the optic lobe medulla of the central nervous system (CNS). Also expressed in the nurse cells and follicle cells of the egg chambers in the ovary at oogenic stages 1-10, and spermatogonia and spermatocytes in the testis. Expressed ubiquitously in the embryonic CNS. In larvae, expressed in the ventral cortical layer of the ventral nerve cord, the cortical layer of the brain lobes, salivary glands, midgut, imaginal disks and developing reproductive organs. Expressed in the larval prothoracic gland with weak expression in other regions of the ring gland.

The protein localises to the cell membrane. Functionally, autoreceptor for octopamine, which is a neurotransmitter, neurohormone, and neuromodulator in invertebrates. Probably also acts as a receptor for tyramine during ecdysone biosynthesis. Required for the biosynthesis of the steroid hormone ecdysone which is necessary for metamorphosis. Involved in activation of prothoracicotropic hormone and insulin-like peptide signaling which is required for the expression of ecdysone biosynthetic genes. The sequence is that of Octopamine receptor beta-3R from Drosophila melanogaster (Fruit fly).